Consider the following 509-residue polypeptide: Maturase K (509 aa).

It belongs to the intron maturase 2 family. MatK subfamily.

It is found in the plastid. The protein localises to the chloroplast. In terms of biological role, usually encoded in the trnK tRNA gene intron. Probably assists in splicing its own and other chloroplast group II introns. This chain is Maturase K, found in Ibicella lutea (Yellow unicorn-plant).